We begin with the raw amino-acid sequence, 176 residues long: 3-hydroxydecanoyl-[acyl-carrier-protein] dehydratase (176 aa).

The active site involves histidine 71.

The protein belongs to the thioester dehydratase family. FabA subfamily. Homodimer.

The protein resides in the cytoplasm. It carries out the reaction a (3R)-hydroxyacyl-[ACP] = a (2E)-enoyl-[ACP] + H2O. It catalyses the reaction (3R)-hydroxydecanoyl-[ACP] = (2E)-decenoyl-[ACP] + H2O. The enzyme catalyses (2E)-decenoyl-[ACP] = (3Z)-decenoyl-[ACP]. The protein operates within lipid metabolism; fatty acid biosynthesis. Its function is as follows. Necessary for the introduction of cis unsaturation into fatty acids. Catalyzes the dehydration of (3R)-3-hydroxydecanoyl-ACP to E-(2)-decenoyl-ACP and then its isomerization to Z-(3)-decenoyl-ACP. Can catalyze the dehydratase reaction for beta-hydroxyacyl-ACPs with saturated chain lengths up to 16:0, being most active on intermediate chain length. The protein is 3-hydroxydecanoyl-[acyl-carrier-protein] dehydratase of Afipia carboxidovorans (strain ATCC 49405 / DSM 1227 / KCTC 32145 / OM5) (Oligotropha carboxidovorans).